The primary structure comprises 376 residues: Chaperone protein DnaJ (376 aa).

Residues 5 to 69 (DYYEILGVDR…EKRARYDRFG (65 aa)) form the J domain. The segment at 135 to 217 (GLETDIRVPH…CNGKGVVRKT (83 aa)) adopts a CR-type zinc-finger fold. Cys148, Cys151, Cys165, Cys168, Cys191, Cys194, Cys205, and Cys208 together coordinate Zn(2+). 4 CXXCXGXG motif repeats span residues 148-155 (CPVCHGSR), 165-172 (CQTCGGSG), 191-198 (CPDCQGEG), and 205-212 (CSNCNGKG).

The protein belongs to the DnaJ family. Homodimer. Requires Zn(2+) as cofactor.

It localises to the cytoplasm. Functionally, participates actively in the response to hyperosmotic and heat shock by preventing the aggregation of stress-denatured proteins and by disaggregating proteins, also in an autonomous, DnaK-independent fashion. Unfolded proteins bind initially to DnaJ; upon interaction with the DnaJ-bound protein, DnaK hydrolyzes its bound ATP, resulting in the formation of a stable complex. GrpE releases ADP from DnaK; ATP binding to DnaK triggers the release of the substrate protein, thus completing the reaction cycle. Several rounds of ATP-dependent interactions between DnaJ, DnaK and GrpE are required for fully efficient folding. Also involved, together with DnaK and GrpE, in the DNA replication of plasmids through activation of initiation proteins. The chain is Chaperone protein DnaJ from Methanothermobacter thermautotrophicus (strain ATCC 29096 / DSM 1053 / JCM 10044 / NBRC 100330 / Delta H) (Methanobacterium thermoautotrophicum).